Consider the following 583-residue polypeptide: Inactive carboxylesterase-like protein VdtD (583 aa).

A signal peptide spans 1–23; it reads MFMTQIVFGIAPTLLKTFSHLTA. N84, N109, N221, N265, N307, N350, N388, N448, and N468 each carry an N-linked (GlcNAc...) asparagine glycan.

It belongs to the type-B carboxylesterase/lipase family.

The protein operates within secondary metabolite biosynthesis. Inactive carboxylesterase-like protein; part of the gene cluster that mediates the biosynthesis of viriditoxin, one of the 'classical' secondary metabolites produced by fungi and that has antibacterial activity. The first step is performed by the polyketide synthase VdtA which condenses one acetyl-CoA and 6 malonyl-CoA units to form the heptaketide monomer backbone of viriditoxin. The product of VdtA is then O-methylated on C7 by the O-methyltransferase VdtC. The O-methyl group is important for the stereoselective coupling of the monomers at the final step of viriditoxin biosynthesis. The short-chain dehydrogenase/reductase VdtF then acts as a stereospecific reductase converting the pyrone to dihydropyrone via the reduction of the C3-C4 double bond. The FAD-binding monooxygenase VdtE then converts the ketone group into a methyl-ester group to yield semi-viriditoxin. Finally, the laccase VdtB is involved in dimerization of 2 semi-viriditoxin molecules to yield the final viriditoxin. VdtB is responsible for the regioselective 6,6'-coupling of semi-viriditoxin, which yields (M)-viriditoxin and (P)-viriditoxin at a ratio of 1:2. The non-catalytic carboxylesterase-like protein VdtD affects the stereochemistical outcome of the coupling. The highly reducing polyketide synthase VdtX is not involved in viriditoxin synthesis, but might possibly play a role in the production of additional metabolites not identified yet. In Byssochlamys spectabilis (Paecilomyces variotii), this protein is Inactive carboxylesterase-like protein VdtD.